The sequence spans 561 residues: Arginine--tRNA ligase (561 aa).

The 'HIGH' region motif lies at 128–138; that stretch reads ANPTGPLHVGH.

This sequence belongs to the class-I aminoacyl-tRNA synthetase family. In terms of assembly, monomer.

It localises to the cytoplasm. The enzyme catalyses tRNA(Arg) + L-arginine + ATP = L-arginyl-tRNA(Arg) + AMP + diphosphate. The protein is Arginine--tRNA ligase of Methylibium petroleiphilum (strain ATCC BAA-1232 / LMG 22953 / PM1).